Consider the following 170-residue polypeptide: Adenine phosphoribosyltransferase (170 aa).

The protein belongs to the purine/pyrimidine phosphoribosyltransferase family. Homodimer.

It is found in the cytoplasm. It carries out the reaction AMP + diphosphate = 5-phospho-alpha-D-ribose 1-diphosphate + adenine. It participates in purine metabolism; AMP biosynthesis via salvage pathway; AMP from adenine: step 1/1. Its function is as follows. Catalyzes a salvage reaction resulting in the formation of AMP, that is energically less costly than de novo synthesis. The chain is Adenine phosphoribosyltransferase from Cenarchaeum symbiosum (strain A).